Reading from the N-terminus, the 252-residue chain is Pyridoxine 5'-phosphate synthase (252 aa).

3-amino-2-oxopropyl phosphate is bound at residue Asn7. 9–10 (DH) contacts 1-deoxy-D-xylulose 5-phosphate. Arg18 lines the 3-amino-2-oxopropyl phosphate pocket. His43 functions as the Proton acceptor in the catalytic mechanism. 1-deoxy-D-xylulose 5-phosphate contacts are provided by Arg45 and His50. Residue Glu70 is the Proton acceptor of the active site. Thr100 is a 1-deoxy-D-xylulose 5-phosphate binding site. His190 serves as the catalytic Proton donor. 3-amino-2-oxopropyl phosphate is bound by residues Gly191 and 212–213 (GH).

The protein belongs to the PNP synthase family. As to quaternary structure, homooctamer; tetramer of dimers.

It is found in the cytoplasm. It catalyses the reaction 3-amino-2-oxopropyl phosphate + 1-deoxy-D-xylulose 5-phosphate = pyridoxine 5'-phosphate + phosphate + 2 H2O + H(+). It participates in cofactor biosynthesis; pyridoxine 5'-phosphate biosynthesis; pyridoxine 5'-phosphate from D-erythrose 4-phosphate: step 5/5. Catalyzes the complicated ring closure reaction between the two acyclic compounds 1-deoxy-D-xylulose-5-phosphate (DXP) and 3-amino-2-oxopropyl phosphate (1-amino-acetone-3-phosphate or AAP) to form pyridoxine 5'-phosphate (PNP) and inorganic phosphate. This Synechococcus sp. (strain RCC307) protein is Pyridoxine 5'-phosphate synthase.